Consider the following 200-residue polypeptide: 3-isopropylmalate dehydratase small subunit (200 aa).

This sequence belongs to the LeuD family. LeuD type 1 subfamily. As to quaternary structure, heterodimer of LeuC and LeuD.

The enzyme catalyses (2R,3S)-3-isopropylmalate = (2S)-2-isopropylmalate. It functions in the pathway amino-acid biosynthesis; L-leucine biosynthesis; L-leucine from 3-methyl-2-oxobutanoate: step 2/4. Functionally, catalyzes the isomerization between 2-isopropylmalate and 3-isopropylmalate, via the formation of 2-isopropylmaleate. The chain is 3-isopropylmalate dehydratase small subunit from Histophilus somni (strain 129Pt) (Haemophilus somnus).